The primary structure comprises 54 residues: H-bracotoxin-Cf4 (54 aa).

Residues 1–21 (MSKLFIFFLLVALLAFVSSEA) form the signal peptide. Cystine bridges form between C24/C39, C31/C43, and C38/C53.

Expressed by the venom duct.

The protein localises to the secreted. In terms of biological role, this endoparasitoid wasp peptide has a role in disruption of the cellular host immune response, since it reduces the capacity of D.saccharalis hemocytes to encapsulate foreign bodies. On the other hand, it shows no effect on the humoral immune response, since it has no effect on phenoloxidase activity. This is H-bracotoxin-Cf4 from Cotesia flavipes (Parasitic wasp).